The chain runs to 213 residues: Thiamine-phosphate synthase (213 aa).

4-amino-2-methyl-5-(diphosphooxymethyl)pyrimidine is bound by residues 38 to 42 (QLREK) and Asp-70. Asp-71 and Glu-90 together coordinate Mg(2+). Ser-109 is a 4-amino-2-methyl-5-(diphosphooxymethyl)pyrimidine binding site. 135-137 (TQT) is a binding site for 2-[(2R,5Z)-2-carboxy-4-methylthiazol-5(2H)-ylidene]ethyl phosphate. Lys-138 is a binding site for 4-amino-2-methyl-5-(diphosphooxymethyl)pyrimidine. 2-[(2R,5Z)-2-carboxy-4-methylthiazol-5(2H)-ylidene]ethyl phosphate contacts are provided by residues Gly-165 and 185 to 186 (VS).

Belongs to the thiamine-phosphate synthase family. Mg(2+) serves as cofactor.

The catalysed reaction is 2-[(2R,5Z)-2-carboxy-4-methylthiazol-5(2H)-ylidene]ethyl phosphate + 4-amino-2-methyl-5-(diphosphooxymethyl)pyrimidine + 2 H(+) = thiamine phosphate + CO2 + diphosphate. The enzyme catalyses 2-(2-carboxy-4-methylthiazol-5-yl)ethyl phosphate + 4-amino-2-methyl-5-(diphosphooxymethyl)pyrimidine + 2 H(+) = thiamine phosphate + CO2 + diphosphate. It carries out the reaction 4-methyl-5-(2-phosphooxyethyl)-thiazole + 4-amino-2-methyl-5-(diphosphooxymethyl)pyrimidine + H(+) = thiamine phosphate + diphosphate. The protein operates within cofactor biosynthesis; thiamine diphosphate biosynthesis; thiamine phosphate from 4-amino-2-methyl-5-diphosphomethylpyrimidine and 4-methyl-5-(2-phosphoethyl)-thiazole: step 1/1. Condenses 4-methyl-5-(beta-hydroxyethyl)thiazole monophosphate (THZ-P) and 2-methyl-4-amino-5-hydroxymethyl pyrimidine pyrophosphate (HMP-PP) to form thiamine monophosphate (TMP). This chain is Thiamine-phosphate synthase, found in Lacticaseibacillus paracasei (strain ATCC 334 / BCRC 17002 / CCUG 31169 / CIP 107868 / KCTC 3260 / NRRL B-441) (Lactobacillus paracasei).